The primary structure comprises 439 residues: ATP-dependent protease ATPase subunit HslU (439 aa).

ATP-binding positions include Ile17, 59–64 (GVGKTE), Asp251, Glu317, and Arg389.

This sequence belongs to the ClpX chaperone family. HslU subfamily. As to quaternary structure, a double ring-shaped homohexamer of HslV is capped on each side by a ring-shaped HslU homohexamer. The assembly of the HslU/HslV complex is dependent on binding of ATP.

The protein localises to the cytoplasm. ATPase subunit of a proteasome-like degradation complex; this subunit has chaperone activity. The binding of ATP and its subsequent hydrolysis by HslU are essential for unfolding of protein substrates subsequently hydrolyzed by HslV. HslU recognizes the N-terminal part of its protein substrates and unfolds these before they are guided to HslV for hydrolysis. This chain is ATP-dependent protease ATPase subunit HslU, found in Campylobacter jejuni subsp. doylei (strain ATCC BAA-1458 / RM4099 / 269.97).